Here is a 359-residue protein sequence, read N- to C-terminus: Norspermidine sensor (359 aa).

An N-terminal signal peptide occupies residues 1–33 (MTNFCNEWVSYSQMIKRFLSLMVLNTVCYQASA).

This sequence belongs to the bacterial solute-binding protein PotD/PotF family.

It is found in the periplasm. In terms of biological role, acts as a sensor of norspermidine and enhances biofilm formation. When complexed to norspermidine, could interact with the periplasmic portion of MbaA to regulate its enzymatic activity. The protein is Norspermidine sensor (nspS) of Vibrio cholerae serotype O1 (strain ATCC 39315 / El Tor Inaba N16961).